A 688-amino-acid chain; its full sequence is Glycine--tRNA ligase beta subunit (688 aa).

Belongs to the class-II aminoacyl-tRNA synthetase family. In terms of assembly, tetramer of two alpha and two beta subunits.

Its subcellular location is the cytoplasm. It carries out the reaction tRNA(Gly) + glycine + ATP = glycyl-tRNA(Gly) + AMP + diphosphate. This is Glycine--tRNA ligase beta subunit from Chromohalobacter salexigens (strain ATCC BAA-138 / DSM 3043 / CIP 106854 / NCIMB 13768 / 1H11).